A 468-amino-acid chain; its full sequence is Membrane-associated tyrosine- and threonine-specific cdc2-inhibitory kinase wee-1.1 (468 aa).

The segment covering 25–42 has biased composition (basic and acidic residues); that stretch reads SKDEPNKLNTSRKLEVTT. Positions 25–63 are disordered; it reads SKDEPNKLNTSRKLEVTTKKNQSNNKKRPPPINKARKSL. A compositionally biased stretch (basic residues) spans 49-61; it reads NKKRPPPINKARK. The 252-residue stretch at 106–357 folds into the Protein kinase domain; the sequence is FNFDKNLGKG…SELMKNHVVK (252 aa). Residues 112-120 and Lys-135 contribute to the ATP site; that span reads LGKGSFGEV. Asp-224 acts as the Proton acceptor in catalysis. Asn-229 and Asp-242 together coordinate Mg(2+). The tract at residues 425–453 is disordered; the sequence is EDEYEVFSPPRTPVKKSRYQQTMPEVSPP.

This sequence belongs to the protein kinase superfamily. Ser/Thr protein kinase family. WEE1 subfamily. In terms of tissue distribution, in the 12-13-cell embryo, expressed in the E blastomere. In the 16-cell embryo, expressed in the eight AB cells.

The protein resides in the nucleus. The catalysed reaction is L-seryl-[protein] + ATP = O-phospho-L-seryl-[protein] + ADP + H(+). The enzyme catalyses L-threonyl-[protein] + ATP = O-phospho-L-threonyl-[protein] + ADP + H(+). Its function is as follows. Acts as a negative regulator of entry into mitosis (G2 to M transition) by phosphorylation of the CDK1 kinase. The sequence is that of Membrane-associated tyrosine- and threonine-specific cdc2-inhibitory kinase wee-1.1 (wee-1.1) from Caenorhabditis elegans.